The sequence spans 338 residues: Lipoate-protein ligase A (338 aa).

The region spanning 29 to 216 (PATQRVLFLW…AFFAHYGERV (188 aa)) is the BPL/LPL catalytic domain. Residues arginine 71, 76-79 (GAVF), and lysine 134 contribute to the ATP site. Lysine 134 contacts (R)-lipoate.

Belongs to the LplA family. In terms of assembly, monomer.

It localises to the cytoplasm. It catalyses the reaction L-lysyl-[lipoyl-carrier protein] + (R)-lipoate + ATP = N(6)-[(R)-lipoyl]-L-lysyl-[lipoyl-carrier protein] + AMP + diphosphate + H(+). The protein operates within protein modification; protein lipoylation via exogenous pathway; protein N(6)-(lipoyl)lysine from lipoate: step 1/2. Its pathway is protein modification; protein lipoylation via exogenous pathway; protein N(6)-(lipoyl)lysine from lipoate: step 2/2. Catalyzes both the ATP-dependent activation of exogenously supplied lipoate to lipoyl-AMP and the transfer of the activated lipoyl onto the lipoyl domains of lipoate-dependent enzymes. This chain is Lipoate-protein ligase A, found in Salmonella paratyphi C (strain RKS4594).